The sequence spans 222 residues: UPF0502 protein XAC4278 (222 aa).

Belongs to the UPF0502 family.

In Xanthomonas axonopodis pv. citri (strain 306), this protein is UPF0502 protein XAC4278.